Consider the following 465-residue polypeptide: CCA-adding enzyme (465 aa).

2 residues coordinate ATP: serine 63 and lysine 66. CTP contacts are provided by serine 63 and lysine 66. 3 residues coordinate Mg(2+): glutamate 75, aspartate 77, and aspartate 127. Residues histidine 149, lysine 171, and tyrosine 180 each coordinate ATP. Positions 149, 171, and 180 each coordinate CTP.

Belongs to the tRNA nucleotidyltransferase/poly(A) polymerase family. Archaeal CCA-adding enzyme subfamily. Homodimer. Mg(2+) is required as a cofactor.

The catalysed reaction is a tRNA precursor + 2 CTP + ATP = a tRNA with a 3' CCA end + 3 diphosphate. It catalyses the reaction a tRNA with a 3' CCA end + 2 CTP + ATP = a tRNA with a 3' CCACCA end + 3 diphosphate. In terms of biological role, catalyzes the addition and repair of the essential 3'-terminal CCA sequence in tRNAs without using a nucleic acid template. Adds these three nucleotides in the order of C, C, and A to the tRNA nucleotide-73, using CTP and ATP as substrates and producing inorganic pyrophosphate. tRNA 3'-terminal CCA addition is required both for tRNA processing and repair. Also involved in tRNA surveillance by mediating tandem CCA addition to generate a CCACCA at the 3' terminus of unstable tRNAs. While stable tRNAs receive only 3'-terminal CCA, unstable tRNAs are marked with CCACCA and rapidly degraded. The polypeptide is CCA-adding enzyme (Aeropyrum pernix (strain ATCC 700893 / DSM 11879 / JCM 9820 / NBRC 100138 / K1)).